Here is a 120-residue protein sequence, read N- to C-terminus: Immunoglobulin lambda variable 2-14 (120 aa).

An N-terminal signal peptide occupies residues 1–19 (MAWALLLLTLLTQGTGSWA). Position 20 is a pyrrolidone carboxylic acid (glutamine 20). The framework-1 stretch occupies residues 20–44 (QSALTQPASVSGSPGQSITISCTGT). An Ig-like domain is found at 20–119 (QSALTQPASV…SSYTSSSTLH (100 aa)). Cysteine 41 and cysteine 109 form a disulfide bridge. Residues 45 to 53 (SSDVGGYNY) form a complementarity-determining-1 region. The segment at 54 to 70 (VSWYQQHPGKAPKLMIY) is framework-2. Positions 71–73 (EVS) are complementarity-determining-2. The segment at 74–109 (NRPSGVSNRFSGSKSGNTASLTISGLQAEDEADYYC) is framework-3. The segment at 110–119 (SSYTSSSTLH) is complementarity-determining-3.

In terms of assembly, immunoglobulins are composed of two identical heavy chains and two identical light chains; disulfide-linked.

It localises to the secreted. The protein localises to the cell membrane. In terms of biological role, v region of the variable domain of immunoglobulin light chains that participates in the antigen recognition. Immunoglobulins, also known as antibodies, are membrane-bound or secreted glycoproteins produced by B lymphocytes. In the recognition phase of humoral immunity, the membrane-bound immunoglobulins serve as receptors which, upon binding of a specific antigen, trigger the clonal expansion and differentiation of B lymphocytes into immunoglobulins-secreting plasma cells. Secreted immunoglobulins mediate the effector phase of humoral immunity, which results in the elimination of bound antigens. The antigen binding site is formed by the variable domain of one heavy chain, together with that of its associated light chain. Thus, each immunoglobulin has two antigen binding sites with remarkable affinity for a particular antigen. The variable domains are assembled by a process called V-(D)-J rearrangement and can then be subjected to somatic hypermutations which, after exposure to antigen and selection, allow affinity maturation for a particular antigen. This Homo sapiens (Human) protein is Immunoglobulin lambda variable 2-14.